Consider the following 249-residue polypeptide: DNA polymerase sliding clamp (249 aa).

The protein belongs to the PCNA family. As to quaternary structure, homotrimer. The subunits circularize to form a toroid; DNA passes through its center. Replication factor C (RFC) is required to load the toroid on the DNA.

Functionally, sliding clamp subunit that acts as a moving platform for DNA processing. Responsible for tethering the catalytic subunit of DNA polymerase and other proteins to DNA during high-speed replication. The protein is DNA polymerase sliding clamp of Methanococcus vannielii (strain ATCC 35089 / DSM 1224 / JCM 13029 / OCM 148 / SB).